Reading from the N-terminus, the 358-residue chain is Aminomethyltransferase (358 aa).

Belongs to the GcvT family. As to quaternary structure, the glycine cleavage system is composed of four proteins: P, T, L and H.

The enzyme catalyses N(6)-[(R)-S(8)-aminomethyldihydrolipoyl]-L-lysyl-[protein] + (6S)-5,6,7,8-tetrahydrofolate = N(6)-[(R)-dihydrolipoyl]-L-lysyl-[protein] + (6R)-5,10-methylene-5,6,7,8-tetrahydrofolate + NH4(+). Its function is as follows. The glycine cleavage system catalyzes the degradation of glycine. In Francisella tularensis subsp. mediasiatica (strain FSC147), this protein is Aminomethyltransferase.